Here is a 58-residue protein sequence, read N- to C-terminus: Succinate dehydrogenase subunit 8A, mitochondrial (58 aa).

Component of complex II composed of eight subunits in plants: four classical SDH subunits SDH1, SDH2, SDH3 and SDH4 (a flavoprotein (FP), an iron-sulfur protein (IP), and a cytochrome b composed of a large and a small subunit.), as well as four subunits unknown in mitochondria from bacteria and heterotrophic eukaryotes.

The protein resides in the mitochondrion inner membrane. It functions in the pathway carbohydrate metabolism; tricarboxylic acid cycle. This chain is Succinate dehydrogenase subunit 8A, mitochondrial, found in Oryza sativa subsp. japonica (Rice).